The chain runs to 807 residues: PGC-1 and ERR-induced regulator in muscle protein 1 (807 aa).

Disordered stretches follow at residues 29–80 (QADL…EDVA), 121–391 (CPGQ…TPAS), and 517–548 (PSHE…AGSR). 2 stretches are compositionally biased toward low complexity: residues 40-52 (SSDI…SGSS) and 145-160 (PAPS…PESP). Over residues 162–171 (HSDNPQSSPD) the composition is skewed to polar residues. Residues 180–194 (PGRKKRRAVGAKGTK) are compositionally biased toward basic residues. Polar residues-rich tracts occupy residues 195–211 (HSGS…SPQL), 311–346 (KPQS…STPA), and 363–391 (ALST…TPAS). Ser-198 is modified (phosphoserine). Thr-534 carries the post-translational modification Phosphothreonine. Arg-548 carries the post-translational modification Omega-N-methylarginine.

Highly expressed in skeletal muscles and heart with lower levels in brown adipose tissue (at protein level). Muscle-specific expression is increased by endurance exercise.

The protein localises to the cytoplasm. Its subcellular location is the nucleus. Its function is as follows. Regulates the expression of selective PPARGC1A/B and ESRRA/B/G target genes with roles in glucose and lipid metabolism, energy transfer, contractile function, muscle mitochondrial biogenesis and oxidative capacity. Required for the efficient induction of MT-CO2, MT-CO3, COX4I1, TFB1M, TFB2M, POLRMT and SIRT3 by PPARGC1A. Positively regulates the PPARGC1A/ESRRG-induced expression of CKMT2, TNNI3 and SLC2A4 and negatively regulates the PPARGC1A/ESRRG-induced expression of PDK4. The protein is PGC-1 and ERR-induced regulator in muscle protein 1 (Perm1) of Mus musculus (Mouse).